A 981-amino-acid chain; its full sequence is Serine/threonine-protein kinase D1044.8 (981 aa).

In terms of domain architecture, Protein kinase spans 453 to 725 (YELLDQLGAG…MCGVRLLEYL (273 aa)). Residues 459–467 (LGAGAFGCV) and K488 contribute to the ATP site. Catalysis depends on D591, which acts as the Proton acceptor. Residues 735 to 746 (TSDMTASQSSYN) are compositionally biased toward polar residues. Disordered regions lie at residues 735–802 (TSDM…PSSI) and 823–847 (IPSR…TELK). Over residues 752–762 (SPSSLNSSTSS) the composition is skewed to low complexity. A compositionally biased stretch (polar residues) spans 830–847 (QTCSTEHPARSSSSTELK).

Belongs to the protein kinase superfamily. NEK Ser/Thr protein kinase family. NIMA subfamily. Requires Mg(2+) as cofactor.

It catalyses the reaction L-seryl-[protein] + ATP = O-phospho-L-seryl-[protein] + ADP + H(+). The enzyme catalyses L-threonyl-[protein] + ATP = O-phospho-L-threonyl-[protein] + ADP + H(+). The chain is Serine/threonine-protein kinase D1044.8 (nekl-4) from Caenorhabditis elegans.